We begin with the raw amino-acid sequence, 575 residues long: DNA mismatch repair protein MutL (575 aa).

This sequence belongs to the DNA mismatch repair MutL/HexB family.

In terms of biological role, this protein is involved in the repair of mismatches in DNA. It is required for dam-dependent methyl-directed DNA mismatch repair. May act as a 'molecular matchmaker', a protein that promotes the formation of a stable complex between two or more DNA-binding proteins in an ATP-dependent manner without itself being part of a final effector complex. This Dictyoglomus thermophilum (strain ATCC 35947 / DSM 3960 / H-6-12) protein is DNA mismatch repair protein MutL.